Reading from the N-terminus, the 667-residue chain is mRNA cap guanine-N(7) methyltransferase (667 aa).

Basic and acidic residues predominate over residues 1–19 (MYDPARDSWEERDGDEARS). The tract at residues 1-272 (MYDPARDSWE…RRRQEERERA (272 aa)) is disordered. The span at 33-52 (FSSSEQIYGASGENNNTTDL) shows a compositional bias: polar residues. A compositionally biased stretch (low complexity) spans 72 to 87 (SPPAQSTTQTPPSIST). Polar residues predominate over residues 88–128 (HVQSPVNPAAQEASNTQSLTSAAQNQSNKSTTTMDNTSGSA). Residues 132 to 142 (PRADPSDKSNR) are compositionally biased toward basic and acidic residues. Positions 147 to 156 (ASPTDQNGSQ) are enriched in polar residues. The segment covering 256–272 (LVDRETLRRRQEERERA) has biased composition (basic and acidic residues). Positions 309-667 (SKIKGLRSFN…FYHAFCFYKV (359 aa)) constitute an mRNA cap 0 methyltransferase domain. 318-319 (NN) contributes to the mRNA binding site. S-adenosyl-L-methionine contacts are provided by residues Lys-322, Gly-365, Asp-389, Asp-427, 470–472 (MFT), and Tyr-475. Residues 521-535 (KKERQSQAKKEKTDE) show a composition bias toward basic and acidic residues. A disordered region spans residues 521–547 (KKERQSQAKKEKTDEAPEDGEVEEDDG). A compositionally biased stretch (acidic residues) spans 536–547 (APEDGEVEEDDG).

Belongs to the class I-like SAM-binding methyltransferase superfamily. mRNA cap 0 methyltransferase family.

It localises to the nucleus. It carries out the reaction a 5'-end (5'-triphosphoguanosine)-ribonucleoside in mRNA + S-adenosyl-L-methionine = a 5'-end (N(7)-methyl 5'-triphosphoguanosine)-ribonucleoside in mRNA + S-adenosyl-L-homocysteine. Its function is as follows. Responsible for methylating the 5'-cap structure of mRNAs. This is mRNA cap guanine-N(7) methyltransferase (abd1) from Neosartorya fischeri (strain ATCC 1020 / DSM 3700 / CBS 544.65 / FGSC A1164 / JCM 1740 / NRRL 181 / WB 181) (Aspergillus fischerianus).